Consider the following 887-residue polypeptide: DNA mismatch repair protein MutS (887 aa).

602–609 (GPNMSGKS) lines the ATP pocket.

It belongs to the DNA mismatch repair MutS family.

This protein is involved in the repair of mismatches in DNA. It is possible that it carries out the mismatch recognition step. This protein has a weak ATPase activity. The chain is DNA mismatch repair protein MutS from Staphylococcus saprophyticus subsp. saprophyticus (strain ATCC 15305 / DSM 20229 / NCIMB 8711 / NCTC 7292 / S-41).